We begin with the raw amino-acid sequence, 378 residues long: Glutamate 5-kinase (378 aa).

Lys20 contacts ATP. Residues Ser60, Asp147, and Asn159 each coordinate substrate. ATP is bound by residues 179-180 and 221-227; these read TD and TGGMATK. In terms of domain architecture, PUA spans 286 to 364; sequence AGDIVIDAGA…QEIYKVLGYE (79 aa).

The protein belongs to the glutamate 5-kinase family.

It localises to the cytoplasm. The enzyme catalyses L-glutamate + ATP = L-glutamyl 5-phosphate + ADP. It functions in the pathway amino-acid biosynthesis; L-proline biosynthesis; L-glutamate 5-semialdehyde from L-glutamate: step 1/2. Its function is as follows. Catalyzes the transfer of a phosphate group to glutamate to form L-glutamate 5-phosphate. In Photobacterium profundum (strain SS9), this protein is Glutamate 5-kinase.